The chain runs to 36 residues: MGIFHKLTFKTIQRRSGIMNDSLQNTDLISHFSHPF.

Required for translation of SpoIIID. The sequence is that of Protein usd (usd) from Bacillus subtilis (strain 168).